Consider the following 685-residue polypeptide: Methionine--tRNA ligase (685 aa).

The 'HIGH' region signature appears at 15-25 (PYANGPIHLGH). Residues cysteine 146, cysteine 149, cysteine 159, and cysteine 162 each contribute to the Zn(2+) site. A 'KMSKS' region motif is present at residues 331–335 (KMSKS). Lysine 334 is a binding site for ATP. Positions 583-685 (DFAKMDLRVA…AGVKAGSRVK (103 aa)) constitute a tRNA-binding domain.

It belongs to the class-I aminoacyl-tRNA synthetase family. MetG type 1 subfamily. In terms of assembly, homodimer. It depends on Zn(2+) as a cofactor.

It is found in the cytoplasm. It carries out the reaction tRNA(Met) + L-methionine + ATP = L-methionyl-tRNA(Met) + AMP + diphosphate. In terms of biological role, is required not only for elongation of protein synthesis but also for the initiation of all mRNA translation through initiator tRNA(fMet) aminoacylation. This chain is Methionine--tRNA ligase, found in Actinobacillus succinogenes (strain ATCC 55618 / DSM 22257 / CCUG 43843 / 130Z).